A 426-amino-acid polypeptide reads, in one-letter code: Putative phosphate permease CT_962 (426 aa).

11 consecutive transmembrane segments (helical) span residues 1-21 (MWLLLVCVVVGGFYTAWNIGA), 37-57 (LTLKQAVLIAAVFEFLGAVLL), 83-103 (VFGMTAALLATGVWLQIASFC), 104-124 (GWPVSTTHAIVGAVLGFGIIL), 140-160 (VSWLASPIIGGYFAFLIFSFI), 183-203 (AIIIFALGLVLILSGAVAPVI), 207-227 (PALRIVCGLSLFAFFFTIWGI), 260-280 (LIVERIFAYLQMIIACFMSFA), 309-329 (VLLVFMSLGGLGLVCGLATWG), 365-385 (LGFPISTTHVVVGSVLGIGFA), and 399-419 (IVLSWFITVPAGAALSIVFFL).

Belongs to the inorganic phosphate transporter (PiT) (TC 2.A.20) family.

The protein localises to the cell membrane. Functionally, potential transporter for phosphate. This is Putative phosphate permease CT_962 from Chlamydia trachomatis serovar D (strain ATCC VR-885 / DSM 19411 / UW-3/Cx).